A 140-amino-acid chain; its full sequence is MKFIITLFAAIVMAAAVSGFIVGDKKEDEWRMAFDRLMMEELETKIDQVEKGLLHLSEQYKELEKTKSKELKEQILRELTIGENFMKGALKFFEMEAKRTDLNMFERYNYEFALESIKLLIKKLDELAKKVKAVNPDEYY.

Positions 1-19 (MKFIITLFAAIVMAAAVSG) are cleaved as a signal peptide. Immunodominant conformational IgE-binding epitope stretches follow at residues 20–53 (FIVG…EKGL) and 108–140 (YNYE…DEYY).

The protein belongs to the mite group 5 allergen family. Monomer. Homodimer. In terms of tissue distribution, expressed in the epithelium, lumen and microvilli of the midgut, and in feces.

It localises to the cytoplasm. The protein resides in the endoplasmic reticulum. It is found in the vesicle. The protein localises to the secreted. In Dermatophagoides pteronyssinus (European house dust mite), this protein is Mite allergen Der p 21.0101.